A 435-amino-acid polypeptide reads, in one-letter code: Transcription factor tau 55 kDa subunit (435 aa).

Positions 362–417 are disordered; the sequence is GLLSPTEENETTNAGQSKGSSTANDPNIQIQEEDVGLPDSTNTSRDHTGDKEEVQS. S365 is modified (phosphoserine). Residues 372–391 are compositionally biased toward polar residues; sequence TTNAGQSKGSSTANDPNIQI. Residues 405–417 show a composition bias toward basic and acidic residues; that stretch reads SRDHTGDKEEVQS.

Component of the TFIIIC complex composed of TFC1, TFC3, TFC4, TFC6, TFC7 and TFC8. The subunits are organized in two globular domains, tauA and tauB, connected by a proteolysis-sensitive and flexible linker.

It localises to the nucleus. TFIIIC mediates tRNA and 5S RNA gene activation by binding to intragenic promoter elements. Upstream of the transcription start site, TFIIIC assembles the initiation complex TFIIIB-TFIIIC-tDNA, which is sufficient for RNA polymerase III recruitment and function. Part of the tauA domain of TFIIIC that binds boxA DNA promoter sites of tRNA and similar genes. The sequence is that of Transcription factor tau 55 kDa subunit (TFC7) from Saccharomyces cerevisiae (strain ATCC 204508 / S288c) (Baker's yeast).